We begin with the raw amino-acid sequence, 148 residues long: Deoxyuridine 5'-triphosphate nucleotidohydrolase (148 aa).

Residues 67–69 (RSG), Asn-80, 84–86 (LID), and Met-94 contribute to the substrate site.

The protein belongs to the dUTPase family. It depends on Mg(2+) as a cofactor.

The catalysed reaction is dUTP + H2O = dUMP + diphosphate + H(+). Its pathway is pyrimidine metabolism; dUMP biosynthesis; dUMP from dCTP (dUTP route): step 2/2. Its function is as follows. This enzyme is involved in nucleotide metabolism: it produces dUMP, the immediate precursor of thymidine nucleotides and it decreases the intracellular concentration of dUTP so that uracil cannot be incorporated into DNA. This chain is Deoxyuridine 5'-triphosphate nucleotidohydrolase, found in Paraburkholderia phytofirmans (strain DSM 17436 / LMG 22146 / PsJN) (Burkholderia phytofirmans).